The primary structure comprises 840 residues: Origin recognition complex subunit 1 (840 aa).

The BAH domain occupies 44-170 (IHIKVGQFVL…KKDFAPLPPE (127 aa)). Disordered regions lie at residues 195–218 (VKSP…STSK) and 242–301 (FTRK…KNGQ). 6 positions are modified to phosphoserine: S197, S255, S258, S276, S291, and S332. Residues 392–414 (DGDDRDQEEEESVDSESEEEDEF) are compositionally biased toward acidic residues. The interval 392 to 456 (DGDDRDQEEE…HRATPQIRDR (65 aa)) is disordered. The segment covering 418–439 (LPTRNSLGQSRTRQTPSKSPQK) has biased composition (polar residues). ATP-binding positions include V479 and 513-521 (GVPGTGKTA). Residues 480-840 (PDSLPCREQE…NDVLFALKEE (361 aa)) are necessary and sufficient for ORC complex assembly. Residues D599 and E600 each coordinate Mg(2+). ATP-binding residues include E600, N633, and R699.

It belongs to the ORC1 family. Component of ORC, a complex composed of at least 6 subunits: ORC1, ORC2, ORC3, ORC4, ORC5 and ORC6. ORC is regulated in a cell-cycle dependent manner. It is sequentially assembled at the exit from anaphase of mitosis and disassembled as cells enter S phase. Interacts with CDC6 and KAT7/HBO1. Interacts with LRWD1 predominantly during the G1 phase and with less affinity during mitosis, when phosphorylated. In terms of processing, phosphorylated during mitosis.

It is found in the nucleus. In terms of biological role, component of the origin recognition complex (ORC) that binds origins of replication. DNA-binding is ATP-dependent. The specific DNA sequences that define origins of replication have not been identified yet. ORC is required to assemble the pre-replication complex necessary to initiate DNA replication. The chain is Origin recognition complex subunit 1 (Orc1) from Mus musculus (Mouse).